A 590-amino-acid chain; its full sequence is MAPAVFATLNEPSYQEQCGAVFMRKFTNQSVTENTNNLPLFNPNPNPNFERSNSSKQCDDSSEFGSYATFNLAGYTSSQLRELKKRFTSELKQIRILRERIESGTFETQQGYTIPEVPAVRSAPLNNFTGEKNDLGPKKKKQKKNVSGLKRSNQFGPSDPESEKLLAGMLNTCSQILVKLMKHKWAWVFNTPVDVVGLGLHDYHQVVKKPMDLGTVKLNLDKGFYVSPIDFATDVRLTFDNAMTYNPKGQDVYFMADKLLDHFDGMFNPAFKKFEAQQLKLTGSSSRPEPDFKPDFKQRQWNQNPPMVANPRKGTEQISIAKKLDSVKPPQPTLPPQLVEPSRVQSPSPPPPPPVIQPELPQPQPPPPQLEIEVEAPPDVSEVSKGRKGKLPKPKAKDPNKRLMTMEEKSKLGMNLQDLPPEKLGQLLQILRKRNGHLAQDGDEIELDIEAVDNETLWELDRFVTNYKKMASKIKRQGFIRNVSTPPRNMASVAEMGSAEKRTRRGDAGEEDVDIGEDIPIEDYPSVEIERDGTAVAAAASSGSSSSGSSSSSGGSSSSSDSGSGGSSSGSDSDADSVQSPFVEAKEAQC.

The tract at residues 125–160 is disordered; that stretch reads LNNFTGEKNDLGPKKKKQKKNVSGLKRSNQFGPSDP. Residues 164 to 270 enclose the Bromo domain; it reads KLLAGMLNTC…DHFDGMFNPA (107 aa). 2 disordered regions span residues 282 to 400 and 476 to 590; these read TGSS…KDPN and RQGF…EAQC. A compositionally biased stretch (basic and acidic residues) spans 288–298; it reads PEPDFKPDFKQ. A compositionally biased stretch (pro residues) spans 347–369; that stretch reads PSPPPPPPVIQPELPQPQPPPPQ. The NET domain occupies 394–475; sequence PKAKDPNKRL…NYKKMASKIK (82 aa). Over residues 498-508 the composition is skewed to basic and acidic residues; that stretch reads SAEKRTRRGDA. Positions 509–521 are enriched in acidic residues; the sequence is GEEDVDIGEDIPI. Over residues 537-562 the composition is skewed to low complexity; the sequence is AAAASSGSSSSGSSSSSGGSSSSSDS.

It is found in the nucleus. This Arabidopsis thaliana (Mouse-ear cress) protein is Transcription factor GTE7 (GTE7).